The sequence spans 563 residues: Adenine deaminase (563 aa).

It belongs to the metallo-dependent hydrolases superfamily. Adenine deaminase family. Requires Mn(2+) as cofactor.

The enzyme catalyses adenine + H2O + H(+) = hypoxanthine + NH4(+). The protein is Adenine deaminase of Lactiplantibacillus plantarum (strain ATCC BAA-793 / NCIMB 8826 / WCFS1) (Lactobacillus plantarum).